Here is a 165-residue protein sequence, read N- to C-terminus: REP-associated tyrosine transposase (165 aa).

Belongs to the transposase 17 family. RAYT subfamily. In terms of assembly, monomer.

Cleavage occurs in the presence of magnesium, but is much more pronounced with manganese. In terms of biological role, transposase that is always flanked by repeated extragenic palindrome (REP) sequences, which are clustered in structures called bacterial interspersed mosaic elements (BIMEs). RayT catalyzes cleavage and recombination of BIMEs. Binds REP sequences and cleaves BIMEs both upstream and downstream of the REP sequence. Could be important in the creation of BIME variability and amplification. The protein is REP-associated tyrosine transposase of Escherichia coli (strain K12).